The sequence spans 152 residues: Deoxyuridine 5'-triphosphate nucleotidohydrolase (152 aa).

Residues 71-73 (RSG), Asn84, 88-90 (LID), and Met98 each bind substrate.

The protein belongs to the dUTPase family. The cofactor is Mg(2+).

It catalyses the reaction dUTP + H2O = dUMP + diphosphate + H(+). The protein operates within pyrimidine metabolism; dUMP biosynthesis; dUMP from dCTP (dUTP route): step 2/2. This enzyme is involved in nucleotide metabolism: it produces dUMP, the immediate precursor of thymidine nucleotides and it decreases the intracellular concentration of dUTP so that uracil cannot be incorporated into DNA. The chain is Deoxyuridine 5'-triphosphate nucleotidohydrolase from Hahella chejuensis (strain KCTC 2396).